The chain runs to 150 residues: Truncated transcription factor CAULIFLOWER A (150 aa).

The 61-residue stretch at 1-61 (MGRGRVEMKR…GKLFEYSSES (61 aa)) folds into the MADS-box domain. Positions 90-150 (QTNWSMEYSR…IRSRKNQLMH (61 aa)) constitute a K-box; partial domain.

Homodimer capable of binding to CArG-box sequences. Expressed in some of the meristems of arrest-stage cauliflower heads.

The protein localises to the nucleus. In terms of biological role, probable transcription factor that promotes early floral meristem identity in synergy with APETALA1, FRUITFULL and LEAFY. Is required subsequently for the transition of an inflorescence meristem into a floral meristem. Seems to be partially redundant to the function of APETALA1. This Brassica oleracea var. botrytis (Cauliflower) protein is Truncated transcription factor CAULIFLOWER A (CAL-A).